The sequence spans 226 residues: Urease accessory protein UreF (226 aa).

Belongs to the UreF family. As to quaternary structure, ureD, UreF and UreG form a complex that acts as a GTP-hydrolysis-dependent molecular chaperone, activating the urease apoprotein by helping to assemble the nickel containing metallocenter of UreC. The UreE protein probably delivers the nickel.

The protein resides in the cytoplasm. Required for maturation of urease via the functional incorporation of the urease nickel metallocenter. The polypeptide is Urease accessory protein UreF (Burkholderia multivorans (strain ATCC 17616 / 249)).